Here is an 83-residue protein sequence, read N- to C-terminus: Hepcidin-2 (83 aa).

The first 26 residues, 1–26 (MALSTRTQAACLLLLLLASLSSTTYL), serve as a signal peptide directing secretion. Residues 27 to 53 (QQQMRQTTELQPLHGEESRADIAIPMQ) constitute a propeptide that is removed on maturation. 4 disulfides stabilise this stretch: Cys65/Cys81, Cys68/Cys71, Cys69/Cys77, and Cys72/Cys80.

This sequence belongs to the hepcidin family. Highly expressed in the liver and to a much lesser extent in the heart. Also expressed in pancreas.

It is found in the secreted. Seems to act as a signaling molecule involved in the maintenance of iron homeostasis. This Mus musculus (Mouse) protein is Hepcidin-2 (Hamp2).